We begin with the raw amino-acid sequence, 432 residues long: Adenylosuccinate synthetase (432 aa).

GTP contacts are provided by residues 12–18 (GDEGKGK) and 40–42 (GHT). Asp13 acts as the Proton acceptor in catalysis. The Mg(2+) site is built by Asp13 and Gly40. IMP-binding positions include 13-16 (DEGK), 38-41 (NAGH), Thr133, Arg147, Gln228, Thr243, and Arg307. His41 functions as the Proton donor in the catalytic mechanism. 303-309 (TTTGRPR) contacts substrate. Residues Arg309, 335–337 (KLD), and 417–419 (GVG) each bind GTP.

It belongs to the adenylosuccinate synthetase family. In terms of assembly, homodimer. Requires Mg(2+) as cofactor.

The protein localises to the cytoplasm. The enzyme catalyses IMP + L-aspartate + GTP = N(6)-(1,2-dicarboxyethyl)-AMP + GDP + phosphate + 2 H(+). It participates in purine metabolism; AMP biosynthesis via de novo pathway; AMP from IMP: step 1/2. In terms of biological role, plays an important role in the de novo pathway of purine nucleotide biosynthesis. Catalyzes the first committed step in the biosynthesis of AMP from IMP. This chain is Adenylosuccinate synthetase, found in Nocardioides sp. (strain ATCC BAA-499 / JS614).